A 382-amino-acid polypeptide reads, in one-letter code: Adaptive-response sensory kinase SasA (382 aa).

The Histidine kinase domain occupies 160–382 (MLAHDLRSPL…CFHFTLPVYR (223 aa)). His163 carries the phosphohistidine; by autocatalysis modification.

As to quaternary structure, homooligomerizes. Interacts with KaiC. Participates in the KaiABC clock complex, whose core is composed of a KaiC homohexamer, 6 KaiB and up to 6 KaiA dimers. SasA and KaiB(fs) compete to bind to KaiC.

The enzyme catalyses ATP + protein L-histidine = ADP + protein N-phospho-L-histidine.. In terms of biological role, member of the two-component regulatory system SasA/RpaA involved in genome-wide circadian gene expression. One of several clock output pathways. Participates in the Kai clock protein complex, the main circadian regulator in cyanobacteria, via its interaction with KaiC. KaiC enhances the autophosphorylation activity of SasA, which then transfers its phosphate group to RpaA to activate it. In addition to its output function, recruits fold-shifted KaiB (KaiB(fs)) to KaiC to cooperatively form the KaiB(6):KaiC(6) complex (independent of SasA kinase activity). Required for robustness of the circadian rhythm of gene expression and is involved in clock output, also required for adaptation to light/dark cycles. This Crocosphaera subtropica (strain ATCC 51142 / BH68) (Cyanothece sp. (strain ATCC 51142)) protein is Adaptive-response sensory kinase SasA.